A 695-amino-acid chain; its full sequence is Pre-mRNA-splicing factor CLF1 (695 aa).

HAT repeat units follow at residues 41-73 (DVQRRKRTEFEGYLKRNRLDVKQWMRYAVFEIE), 75-107 (HDMRRARSIFERALRVHISYVPLWIRYIESELK), 109-141 (GYINHARNILERAITKLPRVDKLWYKYLIVEES), 143-174 (AHFDIVRNLFQKWCSLEPAAHVWDSFTDFEVR), 176-207 (ERYEDVRNIYSKYVLIHPQFSTWRKWINFEVR), 296-328 (TIILNRKKHYEDILNEKVYDYDTWLLYLQLLEN), 333-365 (LVMEAFSNVLNAAIPTSRTKDKYWKQYILIWIK), 375-412 (NDIPLCGQKFEELIHNIIPNDDFTFSKIWILYAEFEIR), 414-445 (DNLEKARSILGRSLGLCPKRKTFKYYIDLETK), 447-479 (REFDRVRILYENFLKFDPLNLDTWRAYVEFEDS), 521-553 (QNFDNIEPLLKKQVELSNFTVEAWTDYAMKKLT), and 591-629 (NNKDNARDVFERALNYFKEIKRDEDRARILQSYVDFEGQ).

This sequence belongs to the crooked-neck family. In terms of assembly, associated with the spliceosome.

Its subcellular location is the nucleus. Its function is as follows. Involved in pre-mRNA splicing and cell cycle progression. Required for the spliceosome assembly and initiation of the DNA replication. This Candida glabrata (strain ATCC 2001 / BCRC 20586 / JCM 3761 / NBRC 0622 / NRRL Y-65 / CBS 138) (Yeast) protein is Pre-mRNA-splicing factor CLF1 (CLF1).